The primary structure comprises 436 residues: Hydrogenobyrinate a,c-diamide synthase (436 aa).

The GATase cobBQ-type domain maps to 244–435 (RIAVARDDAF…MHVIDFSGEA (192 aa)). Cys-327 acts as the Nucleophile in catalysis.

This sequence belongs to the CobB/CbiA family. Mg(2+) serves as cofactor.

The catalysed reaction is hydrogenobyrinate + 2 L-glutamine + 2 ATP + 2 H2O = hydrogenobyrinate a,c-diamide + 2 L-glutamate + 2 ADP + 2 phosphate + 2 H(+). Its pathway is cofactor biosynthesis; adenosylcobalamin biosynthesis; cob(II)yrinate a,c-diamide from precorrin-2 (aerobic route): step 9/10. Catalyzes the ATP-dependent amidation of the two carboxylate groups at positions a and c of hydrogenobyrinate, using either L-glutamine or ammonia as the nitrogen source. This Brucella abortus biovar 1 (strain 9-941) protein is Hydrogenobyrinate a,c-diamide synthase.